A 207-amino-acid polypeptide reads, in one-letter code: MTQPGRLISFEGIDGSGKSTQARRLAEHLRDTGRDPLLTREPGGSPGAEDIRRLLVEGDPDRWSPETELLLFTAARRDHLERLIQPALAEGRDVITDRFADSTRVYQGATRGDLRALVDQLHSLMIGREPDLTFVIDMPPELALTRGLARASGEDRFEEFGLPFQTALRAGFLDLARANPDRCVVIDGNRPEAEVAADVIAHLTVAA.

Residues 11–49 form a disordered region; it reads EGIDGSGKSTQARRLAEHLRDTGRDPLLTREPGGSPGAE. 12-19 lines the ATP pocket; sequence GIDGSGKS. The span at 24 to 38 shows a compositional bias: basic and acidic residues; the sequence is RLAEHLRDTGRDPLL.

It belongs to the thymidylate kinase family.

It carries out the reaction dTMP + ATP = dTDP + ADP. In terms of biological role, phosphorylation of dTMP to form dTDP in both de novo and salvage pathways of dTTP synthesis. This is Thymidylate kinase from Dinoroseobacter shibae (strain DSM 16493 / NCIMB 14021 / DFL 12).